Here is a 191-residue protein sequence, read N- to C-terminus: Threonylcarbamoyl-AMP synthase (191 aa).

The YrdC-like domain occupies Gln-7–Arg-191.

It belongs to the SUA5 family. TsaC subfamily.

Its subcellular location is the cytoplasm. It carries out the reaction L-threonine + hydrogencarbonate + ATP = L-threonylcarbamoyladenylate + diphosphate + H2O. In terms of biological role, required for the formation of a threonylcarbamoyl group on adenosine at position 37 (t(6)A37) in tRNAs that read codons beginning with adenine. Catalyzes the conversion of L-threonine, HCO(3)(-)/CO(2) and ATP to give threonylcarbamoyl-AMP (TC-AMP) as the acyladenylate intermediate, with the release of diphosphate. This is Threonylcarbamoyl-AMP synthase from Psychromonas ingrahamii (strain DSM 17664 / CCUG 51855 / 37).